Here is a 2753-residue protein sequence, read N- to C-terminus: Maltase-glucoamylase (2753 aa).

Residues 1–13 (MARKKLKKFTTLE) are Cytoplasmic-facing. Residues 14-34 (IVLSVLLLVLFIISIVLIVLL) traverse the membrane as a helical; Signal-anchor for type II membrane protein segment. The Lumenal segment spans residues 35-2753 (AKESLKSTAP…FTSLTWISTL (2719 aa)). The interval 41–87 (STAPDPGTTGTPDPGTTGTPDPGTTGTTHARTTGPPDPGTTGTTPVS) is disordered. Over residues 44–85 (PDPGTTGTPDPGTTGTPDPGTTGTTHARTTGPPDPGTTGTTP) the composition is skewed to low complexity. A P-type 1 domain is found at 88 to 134 (AECPVVNELERINCIPDQPPTKATCDQRGCCWNPQGAVSVPWCYYSK). 3 cysteine pairs are disulfide-bonded: Cys90–Cys118, Cys101–Cys117, and Cys112–Cys130. N-linked (GlcNAc...) asparagine glycosylation is present at Asn135. Asp289 lines the acarbose pocket. Asn295 carries an N-linked (GlcNAc...) asparagine glycan. The segment at 356–737 (PEQVVQEYLE…FRAHSRGDTV (382 aa)) is maltase. An acarbose-binding site is contributed by Asp413. Tyr416 and Tyr425 each carry sulfotyrosine. Asn457, Asn458, and Asn479 each carry an N-linked (GlcNAc...) asparagine glycan. Catalysis depends on Asp529, which acts as the Nucleophile. Residue Glu532 is part of the active site. Acarbose-binding residues include Arg612 and Asp628. Cys659 and Cys670 are oxidised to a cystine. His686 is a binding site for acarbose. N-linked (GlcNAc...) asparagine glycans are attached at residues Asn707, Asn749, Asn827, Asn885, Asn912, Asn977, Asn989, and Asn1255. One can recognise a P-type 2 domain in the interval 954–1000 (WSIKIRDEEKIDCYPDENGASAENCTARGCIWEASNSSGVPFCYFVN). Cystine bridges form between Cys966–Cys983 and Cys978–Cys996. Residues 1221-1632 (TPELVTQQYT…MQKAHTEGVT (412 aa)) are glucoamylase. Tyr1282 carries the sulfotyrosine modification. N-linked (GlcNAc...) asparagine glycosylation is found at Asn1323, Asn1364, and Asn1388. Asp1420 serves as the catalytic Nucleophile. Residue Glu1423 is part of the active site. The Proton donor role is filled by Asp1526. The P-type 3 domain occupies 1850–1896 (WSIKIRDEEKIDCYPDENGDSAENCTARGCIWEASNSSGVPFCYFVN). Disulfide bonds link Cys1862–Cys1879 and Cys1874–Cys1892. Asn2499, Asn2568, Asn2738, and Asn2743 each carry an N-linked (GlcNAc...) asparagine glycan.

Belongs to the glycosyl hydrolase 31 family. As to quaternary structure, monomer. N- and O-glycosylated. In terms of processing, does not undergo intracellular or extracellular proteolytic cleavage. Post-translationally, sulfated. In terms of tissue distribution, broadly expressed. Highly expressed in small intestine. Expressed in granulocytes.

It is found in the apical cell membrane. It catalyses the reaction Hydrolysis of terminal, non-reducing (1-&gt;4)-linked alpha-D-glucose residues with release of alpha-D-glucose.. It carries out the reaction D-maltoheptaose + H2O = D-maltohexaose + alpha-D-glucose. The catalysed reaction is D-maltohexaose + H2O = D-maltopentaose + alpha-D-glucose. The enzyme catalyses D-maltopentaose + H2O = D-maltotetraose + alpha-D-glucose. It catalyses the reaction D-maltotetraose + H2O = D-maltotriose + alpha-D-glucose. It carries out the reaction D-maltotriose + H2O = D-maltose + alpha-D-glucose. The catalysed reaction is D-maltose + H2O = alpha-D-glucose + D-glucose. The enzyme catalyses nigerose + H2O = alpha-D-glucose + D-glucose. It catalyses the reaction kojibiose + H2O = alpha-D-glucose + D-glucose. It carries out the reaction isomaltose + H2O = alpha-D-glucose + D-glucose. The catalysed reaction is 6-O-alpha-D-glucopyranosyl-D-fructose + H2O = alpha-D-glucose + D-fructose. It functions in the pathway carbohydrate degradation. Its activity is regulated as follows. Down-regulated at high oligomaltose concentration as it occurs during the mealtime. Down-regulated by anti-diabetic drug acarbose. Functionally, alpha-(1,4) exo-glucosidase involved in breakdown of dietary starch oligosaccharides in small intestine. Cleaves the non-reducing alpha-(1,4)-linked glucose residue in linear dextrins with retention of anomeric center stereochemistry. Mainly hydrolyzes short length oligomaltoses having two to seven glucose residues. Can cleave alpha-(1,2), alpha-(1,3) and alpha-(1,6) glycosidic linkages with lower efficiency, whereas beta glycosidic linkages are usually not hydrolyzed. This chain is Maltase-glucoamylase, found in Homo sapiens (Human).